We begin with the raw amino-acid sequence, 151 residues long: Putative pre-16S rRNA nuclease (151 aa).

This sequence belongs to the YqgF nuclease family.

The protein localises to the cytoplasm. Could be a nuclease involved in processing of the 5'-end of pre-16S rRNA. The chain is Putative pre-16S rRNA nuclease from Chlamydia pneumoniae (Chlamydophila pneumoniae).